The sequence spans 474 residues: Cysteine--tRNA ligase (474 aa).

Cys27 lines the Zn(2+) pocket. The 'HIGH' region motif lies at 29 to 39; it reads PTVYNYIHIGN. The Zn(2+) site is built by Cys212, His237, and Glu241. The short motif at 271-275 is the 'KMSKS' region element; that stretch reads KMSKS. Lys274 serves as a coordination point for ATP.

This sequence belongs to the class-I aminoacyl-tRNA synthetase family. In terms of assembly, monomer. Zn(2+) is required as a cofactor.

Its subcellular location is the cytoplasm. The enzyme catalyses tRNA(Cys) + L-cysteine + ATP = L-cysteinyl-tRNA(Cys) + AMP + diphosphate. The polypeptide is Cysteine--tRNA ligase (Lactobacillus delbrueckii subsp. bulgaricus (strain ATCC BAA-365 / Lb-18)).